Reading from the N-terminus, the 400-residue chain is Probable RNA polymerase sigma factor RfaY (400 aa).

Positions 62 to 75 (WQRLAQLHQPASFL) match the Polymerase core binding motif. The H-T-H motif DNA-binding region spans 165-184 (SDAAVRKRLSRARATVRNEL).

The protein belongs to the sigma-70 factor family. ECF subfamily.

Its function is as follows. Sigma factors are initiation factors that promote the attachment of RNA polymerase to specific initiation sites and are then released. This sigma factor is involved in lipopolysaccharide biosynthesis and pathogenicity. The polypeptide is Probable RNA polymerase sigma factor RfaY (rfaY) (Xanthomonas campestris pv. campestris (strain ATCC 33913 / DSM 3586 / NCPPB 528 / LMG 568 / P 25)).